The primary structure comprises 610 residues: Phosphomethylpyrimidine synthase (610 aa).

Residues Asn216, Met245, Tyr274, His310, 330–332 (SRG), 371–374 (DGLR), and Glu410 contribute to the substrate site. Zn(2+) is bound at residue His414. Tyr437 contacts substrate. His478 contacts Zn(2+). Residues Cys558, Cys561, and Cys566 each coordinate [4Fe-4S] cluster.

This sequence belongs to the ThiC family. In terms of assembly, homodimer. Requires [4Fe-4S] cluster as cofactor.

It carries out the reaction 5-amino-1-(5-phospho-beta-D-ribosyl)imidazole + S-adenosyl-L-methionine = 4-amino-2-methyl-5-(phosphooxymethyl)pyrimidine + CO + 5'-deoxyadenosine + formate + L-methionine + 3 H(+). It functions in the pathway cofactor biosynthesis; thiamine diphosphate biosynthesis. In terms of biological role, catalyzes the synthesis of the hydroxymethylpyrimidine phosphate (HMP-P) moiety of thiamine from aminoimidazole ribotide (AIR) in a radical S-adenosyl-L-methionine (SAM)-dependent reaction. This Rhizobium etli (strain ATCC 51251 / DSM 11541 / JCM 21823 / NBRC 15573 / CFN 42) protein is Phosphomethylpyrimidine synthase.